We begin with the raw amino-acid sequence, 112 residues long: CENP-A recruiting complex protein mis19 (112 aa).

Component of the CENP-A recruiting complex composed of at least mis16, mis19, mis19 and mis20.

The protein localises to the chromosome. Its subcellular location is the centromere. It localises to the kinetochore. Its function is as follows. Component of the CENP-A recruiting complex that ensures the integrity of mitotic spindles through maintenance of kinetochore factors mis6/CENP-I and cnp1/CENP-A. Links mis16 and mis18 to recruit CENP-A through interacting with non-sense-mediated mRNA decay (NMD) factors and the SWI/SNF complex. Also links mis18 with the CCAN/mis6/ctf19 complex to promote CENP-A assembly. The polypeptide is CENP-A recruiting complex protein mis19 (Schizosaccharomyces pombe (strain 972 / ATCC 24843) (Fission yeast)).